The primary structure comprises 299 residues: UBX domain-containing protein 1 (299 aa).

3 disordered regions span residues alanine 39–proline 61, lysine 127–glutamate 176, and glutamate 191–lysine 218. A compositionally biased stretch (low complexity) spans aspartate 46–proline 61. Residues alanine 111–arginine 179 adopt a coiled-coil conformation. Residues alanine 128–glutamate 176 are compositionally biased toward basic and acidic residues. Residues proline 201–proline 213 are compositionally biased toward low complexity. Residues lysine 218–leucine 295 enclose the UBX domain.

As to quaternary structure, interacts with cdc-48.1 (via N-terminus) and cdc-48.2 (via N-terminus) in vitro; the interaction with cdc-48.1 is not detected in vivo. In terms of tissue distribution, expressed in the germline (at protein level). Expressed in spermatocytes but not in mature sperm (at protein level). Ubiquitously expressed. Predominantly expressed in the spermatheca.

The protein localises to the cytoplasm. It localises to the perinuclear region. Its function is as follows. Ubiquitin-binding protein which acts as an adapter for ATPase cdc-48.1 and/or cdc-48.2, conferring substrate specificity. Together with ubxn-2 and ubxn-3, plays a role in hermaphrodite spermatogenesis probably by promoting the degradation of sex determination terminal factor tra-1. The sequence is that of UBX domain-containing protein 1 from Caenorhabditis elegans.